A 407-amino-acid polypeptide reads, in one-letter code: Protoasukamycin 4-monooxygenase (407 aa).

As to quaternary structure, does not interact with AsuE2, suggesting a possible transient interaction between the two enzymes instead of formation of a stable complex. It depends on FMN as a cofactor. FAD is required as a cofactor. Requires riboflavin as cofactor.

The catalysed reaction is protoasukamycin + NADH + O2 + H(+) = 4-hydroxyprotoasukamycin + NAD(+) + H2O. It functions in the pathway antibiotic biosynthesis. With respect to regulation, when flavin concentration is low, activity is enhanced by the presence of the NADH-dependent flavin reductase AsuE2. In the presence of abundant flavin, activity of AsuE1 is not affected by AsuE2. In terms of biological role, involved in the biosynthesis of the antibiotic asukamycin. Catalyzes the conversion of protoasukamycin to 4-hydroxyprotoasukamycin. Can also convert some protoasukamycin derivatives into their corresponding 4-hydroxyprotoasukamycin derivatives. Can also use NADPH, but catalytic efficiency is 50-fold higher with NADH. This is Protoasukamycin 4-monooxygenase from Streptomyces nodosus subsp. asukaensis.